We begin with the raw amino-acid sequence, 138 residues long: Small ribosomal subunit protein uS11c (138 aa).

Positions 1-22 (MAKSIPRISSRRNGRIGSGNNV) are disordered.

This sequence belongs to the universal ribosomal protein uS11 family. Part of the 30S ribosomal subunit.

It is found in the plastid. This is Small ribosomal subunit protein uS11c from Cuscuta reflexa (Southern Asian dodder).